An 86-amino-acid chain; its full sequence is Small ribosomal subunit protein uS17 (86 aa).

Belongs to the universal ribosomal protein uS17 family. In terms of assembly, part of the 30S ribosomal subunit.

Functionally, one of the primary rRNA binding proteins, it binds specifically to the 5'-end of 16S ribosomal RNA. The chain is Small ribosomal subunit protein uS17 from Helicobacter pylori (strain P12).